The chain runs to 358 residues: ATP synthase gamma chain, chloroplastic (358 aa).

Residues 1–35 constitute a chloroplast transit peptide; it reads MAAMLASKQGAFMGRSSFAPAPKGVASRGSLQVVA. Cys-123 is a catalytic residue. A disulfide bridge connects residues Cys-233 and Cys-239.

The protein belongs to the ATPase gamma chain family. As to quaternary structure, F-type ATPases have 2 components, F(1) - the catalytic core - and F(0) - the membrane proton channel. F(1) has five subunits: alpha(3), beta(3), gamma(1), delta(1), epsilon(1). F(0) has four main subunits: a(1), b(1), b'(1) and c(10-14). The alpha and beta chains form an alternating ring which encloses part of the gamma chain. F(1) is attached to F(0) by a central stalk formed by the gamma and epsilon chains, while a peripheral stalk is formed by the delta, b and b' chains.

The protein resides in the plastid. It is found in the chloroplast thylakoid membrane. Its function is as follows. F(1)F(0) ATP synthase produces ATP from ADP in the presence of a proton or sodium gradient. F-type ATPases consist of two structural domains, F(1) containing the extramembraneous catalytic core and F(0) containing the membrane proton channel, linked together by a central stalk and a peripheral stalk. During catalysis, ATP synthesis in the catalytic domain of F(1) is coupled via a rotary mechanism of the central stalk subunits to proton translocation. In terms of biological role, produces ATP from ADP in the presence of a proton gradient across the membrane. The gamma chain is believed to be important in regulating ATPase activity and the flow of protons through the CF(0) complex. The polypeptide is ATP synthase gamma chain, chloroplastic (Chlamydomonas reinhardtii (Chlamydomonas smithii)).